The following is a 455-amino-acid chain: MKYHIVTLGCPKNAVDSEGMDGLLSTQGHQAVASAEEADVIIVNTCSFIAAARAETLGVLKELAGRKRPGQRLIAAGCMAQSHPHEVAGVQGVDATLGTQQWTQINALVGQLERPVIPLTPGQPVATIPLTTTTNGQPTSYADWRTTQIRRTHQTPSAYLKISDGCNLRCAFCTIPSFKGDMRSKPVGAVLAEAQELVAGGVREIVLVAQHLTDYGRDLGLKDGLATLLAELCQVTPPETWIRLMYAYPHGISERLITTMASYPQICHYLDMPLQHAHPATLRRMRRPPDTDRTLRIIAELRAAMPDIAIRSTFIVGYPGETTAEFHALLEFLQTAQLDRVGAFRYSREPGTPAAELPDQVRPQVIERRWHELMRLQQTISYTRNQRWVGRTIKVLIEGNGTADDGSALSIGRSFRDAPEIDGQVFVWGNYPAGTMIPVQVTQATAYDLWGEALS.

In terms of domain architecture, MTTase N-terminal spans 1–114 (MKYHIVTLGC…INALVGQLER (114 aa)). C10, C46, C78, C166, C170, and C173 together coordinate [4Fe-4S] cluster. The region spanning 152-383 (THQTPSAYLK…MRLQQTISYT (232 aa)) is the Radical SAM core domain. In terms of domain architecture, TRAM spans 386–455 (QRWVGRTIKV…AYDLWGEALS (70 aa)).

The protein belongs to the methylthiotransferase family. RimO subfamily. Requires [4Fe-4S] cluster as cofactor.

It localises to the cytoplasm. The catalysed reaction is L-aspartate(89)-[ribosomal protein uS12]-hydrogen + (sulfur carrier)-SH + AH2 + 2 S-adenosyl-L-methionine = 3-methylsulfanyl-L-aspartate(89)-[ribosomal protein uS12]-hydrogen + (sulfur carrier)-H + 5'-deoxyadenosine + L-methionine + A + S-adenosyl-L-homocysteine + 2 H(+). Catalyzes the methylthiolation of an aspartic acid residue of ribosomal protein uS12. The chain is Ribosomal protein uS12 methylthiotransferase RimO from Chloroflexus aurantiacus (strain ATCC 29366 / DSM 635 / J-10-fl).